The primary structure comprises 371 residues: Peptide chain release factor 2 (371 aa).

Position 250 is an N5-methylglutamine (Q250).

The protein belongs to the prokaryotic/mitochondrial release factor family. In terms of processing, methylated by PrmC. Methylation increases the termination efficiency of RF2.

The protein resides in the cytoplasm. Its function is as follows. Peptide chain release factor 2 directs the termination of translation in response to the peptide chain termination codons UGA and UAA. The sequence is that of Peptide chain release factor 2 from Paramagnetospirillum magneticum (strain ATCC 700264 / AMB-1) (Magnetospirillum magneticum).